The following is a 435-amino-acid chain: ATP-dependent protease ATPase subunit HslU (435 aa).

Residues Ile18, 60 to 65, Asp248, Glu313, and Arg385 contribute to the ATP site; that span reads GVGKTE.

The protein belongs to the ClpX chaperone family. HslU subfamily. In terms of assembly, a double ring-shaped homohexamer of HslV is capped on each side by a ring-shaped HslU homohexamer. The assembly of the HslU/HslV complex is dependent on binding of ATP.

It localises to the cytoplasm. In terms of biological role, ATPase subunit of a proteasome-like degradation complex; this subunit has chaperone activity. The binding of ATP and its subsequent hydrolysis by HslU are essential for unfolding of protein substrates subsequently hydrolyzed by HslV. HslU recognizes the N-terminal part of its protein substrates and unfolds these before they are guided to HslV for hydrolysis. The polypeptide is ATP-dependent protease ATPase subunit HslU (Rhizobium meliloti (strain 1021) (Ensifer meliloti)).